The following is a 146-amino-acid chain: Mite group 2 allergen Der f 2 (146 aa).

A signal peptide spans 1–17 (MISKILCLSLLVAAVVA). 3 cysteine pairs are disulfide-bonded: cysteine 25–cysteine 136, cysteine 38–cysteine 44, and cysteine 90–cysteine 95.

The protein belongs to the NPC2 family.

Its subcellular location is the secreted. The chain is Mite group 2 allergen Der f 2 (DERF2) from Dermatophagoides farinae (American house dust mite).